The chain runs to 510 residues: Abscisic acid 8'-hydroxylase 2 (510 aa).

Residues 3 to 23 form a helical membrane-spanning segment; sequence FLLFFVFVTAAVLCFVVPAFL. Position 441 (Cys441) interacts with heme.

The protein belongs to the cytochrome P450 family. The cofactor is heme.

The protein resides in the membrane. The catalysed reaction is 2-cis-(+)-abscisate + reduced [NADPH--hemoprotein reductase] + O2 = (+)-8'-hydroxyabscisate + oxidized [NADPH--hemoprotein reductase] + H2O + H(+). Its pathway is plant hormone degradation; abscisic acid degradation. In terms of biological role, involved in the oxidative degradation of abscisic acid. In Oryza sativa subsp. japonica (Rice), this protein is Abscisic acid 8'-hydroxylase 2 (CYP707A6).